A 272-amino-acid polypeptide reads, in one-letter code: Cyanophycinase (272 aa).

Residues Ser-132, Glu-150, and His-174 each act as charge relay system in the active site.

This sequence belongs to the peptidase S51 family.

It carries out the reaction [L-4-(L-arginin-2-N-yl)aspartate](n) + H2O = [L-4-(L-arginin-2-N-yl)aspartate](n-1) + L-4-(L-arginin-2-N-yl)aspartate. Exopeptidase that catalyzes the hydrolytic cleavage of multi-L-arginyl-poly-L-aspartic acid (cyanophycin; a water-insoluble reserve polymer) into aspartate-arginine dipeptides. The chain is Cyanophycinase (cphB) from Geminocystis herdmanii (strain PCC 6308) (Synechocystis sp. (strain PCC 6308)).